The chain runs to 521 residues: Vang-like protein 2 (521 aa).

Positions 1 to 81 (MDNDSQYSGY…TTVVTGTSEH (81 aa)) are disordered. At 1 to 108 (MDNDSQYSGY…AKLDCSRHLG (108 aa)) the chain is on the cytoplasmic side. The span at 15 to 33 (GHSRSSRKHRDRRERHRSK) shows a compositional bias: basic residues. Over residues 57–67 (ESTRGEDRDDN) the composition is skewed to basic and acidic residues. The segment covering 69–81 (GETTTVVTGTSEH) has biased composition (low complexity). The helical transmembrane segment at 109–129 (VVIGGALALLSFLTPIAFMLL) threads the bilayer. Residues 130-147 (PQILWREDLEQCGTACEG) are Extracellular-facing. A helical membrane pass occupies residues 148–168 (LFISVAFKLLILLLGSWALFF). Topologically, residues 169–178 (RRPKAFFPRV) are cytoplasmic. The helical transmembrane segment at 179-199 (FVFRALLMVLVFLLVVSYWLF) threads the bilayer. At 200–218 (YGVRILESRDKNYQGIVQY) the chain is on the extracellular side. A helical membrane pass occupies residues 219 to 239 (AVSLVDALLFVHYLAVVLLEL). Residues 240-521 (RQLQPQFTVK…VMRLQSETSV (282 aa)) lie on the Cytoplasmic side of the membrane. The PDZ-binding signature appears at 518 to 521 (ETSV).

The protein belongs to the Vang family. As to quaternary structure, interacts with dvl/dsh. Interacts with prickle3.

Its subcellular location is the cell membrane. Its function is as follows. Has a role in non-canonical Wnt/planar cell polarity (PCP) signaling; can recruit dvl/dsh and prickle from the cytoplasm to the plasma membrane. Acts in a PCP complex to regulate the polarized assembly of fibronectrin on the surface of the mesoderm during gastrulation. Regulates convergent extension in both dorsal mesoderm and neural tissue without affecting cell fate. Regulates neural fold closure during neurulation. May be required for cell surface localization of fzd3 and fzd6 in the inner ear. In Xenopus tropicalis (Western clawed frog), this protein is Vang-like protein 2.